The sequence spans 497 residues: Thiamine transporter 1 (497 aa).

Met-1 carries the post-translational modification N-acetylmethionine. At Met-1–Glu-28 the chain is on the cytoplasmic side. Residues Cys-29–Leu-46 form a helical membrane-spanning segment. At Arg-47–Glu-72 the chain is on the extracellular side. N-linked (GlcNAc...) asparagine glycosylation occurs at Asn-63. The chain crosses the membrane as a helical span at residues Ile-73–Ala-91. The Cytoplasmic segment spans residues Thr-92–Pro-99. Residues Val-100–Ala-118 traverse the membrane as a helical segment. Residues Gln-119 to Glu-128 lie on the Extracellular side of the membrane. Residues Phe-129–Val-149 form a helical membrane-spanning segment. The Cytoplasmic segment spans residues Asp-150 to Thr-165. Residues Leu-166–Trp-185 traverse the membrane as a helical segment. Over Ser-186–Asn-191 the chain is Extracellular. The chain crosses the membrane as a helical span at residues Val-192–Leu-208. Residues Pro-209–Asp-285 lie on the Cytoplasmic side of the membrane. A Phosphoserine modification is found at Ser-222. A helical transmembrane segment spans residues Phe-286 to Phe-310. The Extracellular portion of the chain corresponds to Gln-311–Glu-337. N-linked (GlcNAc...) asparagine glycosylation occurs at Asn-314. Residues Ala-338–Ile-354 traverse the membrane as a helical segment. Residues Lys-355–Glu-363 lie on the Cytoplasmic side of the membrane. A helical transmembrane segment spans residues Met-364 to Met-380. The Extracellular segment spans residues Asp-381 to Ile-386. Residues Trp-387–Phe-409 form a helical membrane-spanning segment. At Gln-410–Arg-419 the chain is on the cytoplasmic side. Residues Tyr-420–Val-443 form a helical membrane-spanning segment. Residues Asp-444–Gln-455 are Extracellular-facing. A helical transmembrane segment spans residues Phe-456 to Met-479. Residues Lys-480–Ser-497 lie on the Cytoplasmic side of the membrane.

It belongs to the reduced folate carrier (RFC) transporter (TC 2.A.48) family. Interacts with TSPAN1; this interaction increases the stability of SLC19A2. Interacts with TMEM63B. Ubiquitous; most abundant in skeletal and cardiac muscle. Medium expression in placenta, heart, liver and kidney, low in lung.

The protein resides in the cell membrane. The enzyme catalyses thiamine(out) + H(+)(in) = thiamine(in) + H(+)(out). The catalysed reaction is pyridoxine(out) + n H(+)(out) = pyridoxine(in) + n H(+)(in). With respect to regulation, pyridoxine transport is inhibited by carbonyl cyanide p-trifluoromethoxyphenylhydrazone (FCCP) and carbonyl cyanide m-chlorophenylhydrazone (CCCP). Its function is as follows. High-affinity transporter for the intake of thiamine. Mediates H(+)-dependent pyridoxine transport. This chain is Thiamine transporter 1 (SLC19A2), found in Homo sapiens (Human).